A 688-amino-acid chain; its full sequence is UvrABC system protein B (688 aa).

The Helicase ATP-binding domain maps to alanine 41–arginine 429. Residue glycine 54–threonine 61 coordinates ATP. The Beta-hairpin signature appears at tyrosine 107–isoleucine 130. The region spanning glutamine 446–methionine 612 is the Helicase C-terminal domain. Residues arginine 616–proline 646 form a disordered region. The segment covering glutamine 633–lysine 645 has biased composition (basic and acidic residues). Residues alanine 650 to alanine 685 enclose the UVR domain.

It belongs to the UvrB family. As to quaternary structure, forms a heterotetramer with UvrA during the search for lesions. Interacts with UvrC in an incision complex.

The protein localises to the cytoplasm. The UvrABC repair system catalyzes the recognition and processing of DNA lesions. A damage recognition complex composed of 2 UvrA and 2 UvrB subunits scans DNA for abnormalities. Upon binding of the UvrA(2)B(2) complex to a putative damaged site, the DNA wraps around one UvrB monomer. DNA wrap is dependent on ATP binding by UvrB and probably causes local melting of the DNA helix, facilitating insertion of UvrB beta-hairpin between the DNA strands. Then UvrB probes one DNA strand for the presence of a lesion. If a lesion is found the UvrA subunits dissociate and the UvrB-DNA preincision complex is formed. This complex is subsequently bound by UvrC and the second UvrB is released. If no lesion is found, the DNA wraps around the other UvrB subunit that will check the other stand for damage. The polypeptide is UvrABC system protein B (Xanthomonas oryzae pv. oryzae (strain KACC10331 / KXO85)).